The following is a 486-amino-acid chain: GDP-Man:Man(3)GlcNAc(2)-PP-Dol alpha-1,2-mannosyltransferase (486 aa).

Topologically, residues 1–16 (MAGPMCLCGMMRLLTA) are lumenal. Residues 17–37 (LFIPVLITSVGLCLIFVLLFI) traverse the membrane as a helical segment. At 38-229 (CTRLWVQRKK…SNNPVLSRLK (192 aa)) the chain is on the cytoplasmic side. The segment at residues 230-250 (LIYYYLFALFYGWVGSCSDVI) is an intramembrane region (helical). The Cytoplasmic segment spans residues 251–393 (MVNSTWTFSH…IGLHTMWNEH (143 aa)). An intramembrane region (helical) is located at residues 394 to 414 (FGIGIVECMAAGTIILAHNSG). Residues 415 to 486 (GPKLDIVVPH…FLASSEPLFK (72 aa)) are Cytoplasmic-facing.

This sequence belongs to the glycosyltransferase group 1 family. Glycosyltransferase 4 subfamily.

The protein localises to the endoplasmic reticulum membrane. The catalysed reaction is an alpha-D-Man-(1-&gt;3)-[alpha-D-Man-(1-&gt;6)]-beta-D-Man-(1-&gt;4)-beta-D-GlcNAc-(1-&gt;4)-alpha-D-GlcNAc-diphospho-di-trans,poly-cis-dolichol + 2 GDP-alpha-D-mannose = an alpha-D-Man-(1-&gt;2)-alpha-D-Man-(1-&gt;2)-alpha-D-Man-(1-&gt;3)-[alpha-D-Man-(1-&gt;6)]-beta-D-Man-(1-&gt;4)-beta-D-GlcNAc-(1-&gt;4)-alpha-D-GlcNAc-diphospho-di-trans,poly-cis-dolichol + 2 GDP + 2 H(+). The protein operates within protein modification; protein glycosylation. GDP-Man:Man(3)GlcNAc(2)-PP-Dol alpha-1,2-mannosyltransferase that operates in the biosynthetic pathway of dolichol-linked oligosaccharides, the glycan precursors employed in protein asparagine (N)-glycosylation. The assembly of dolichol-linked oligosaccharides begins on the cytosolic side of the endoplasmic reticulum membrane and finishes in its lumen. The sequential addition of sugars to dolichol pyrophosphate produces dolichol-linked oligosaccharides containing fourteen sugars, including two GlcNAcs, nine mannoses and three glucoses. Once assembled, the oligosaccharide is transferred from the lipid to nascent proteins by oligosaccharyltransferases. Catalyzes, on the cytoplasmic face of the endoplasmic reticulum, the addition of the fourth and fifth mannose residues to the dolichol-linked oligosaccharide chain, to produce Man(5)GlcNAc(2)-PP-dolichol core oligosaccharide. Man(5)GlcNAc(2)-PP-dolichol is a substrate for ALG3, the following enzyme in the biosynthetic pathway. This chain is GDP-Man:Man(3)GlcNAc(2)-PP-Dol alpha-1,2-mannosyltransferase (alg11), found in Xenopus laevis (African clawed frog).